Here is a 183-residue protein sequence, read N- to C-terminus: MTAYWLAQGVGVIAFLIGITTFFNRDERRFKKQLSVYSAVIGVHFFLLGTYPAGASAILNAIRTLITLRTRSLWVMAIFIVLTGGIGLAKFHHPVELLPVIGTIVSTWALFCCKGLTMRCVMWFSTCCWVIHNFWAGSIGGTMIEGSFLLMNGLNIIRFWRMQKRGIDPFKVEKTPSAVDERG.

At 1–2 the chain is on the periplasmic side; the sequence is MT. The chain crosses the membrane as a helical span at residues 3–23; that stretch reads AYWLAQGVGVIAFLIGITTFF. Residues 24-38 are Cytoplasmic-facing; sequence NRDERRFKKQLSVYS. A helical transmembrane segment spans residues 39–59; the sequence is AVIGVHFFLLGTYPAGASAIL. Residues 60–71 are Periplasmic-facing; that stretch reads NAIRTLITLRTR. 2 helical membrane-spanning segments follow: residues 72–92 and 93–113; these read SLWVMAIFIVLTGGIGLAKFH and HPVELLPVIGTIVSTWALFCC. The Periplasmic segment spans residues 114–133; sequence KGLTMRCVMWFSTCCWVIHN. A helical transmembrane segment spans residues 134–154; the sequence is FWAGSIGGTMIEGSFLLMNGL. The Cytoplasmic portion of the chain corresponds to 155–183; that stretch reads NIIRFWRMQKRGIDPFKVEKTPSAVDERG.

The protein localises to the cell inner membrane. This is Inner membrane protein YgjV (ygjV) from Escherichia coli (strain K12).